A 380-amino-acid chain; its full sequence is Geranylgeranyl pyrophosphate synthase cle6 (380 aa).

Over residues 1–19 (MHSVRTSTTSTSSMVSSTM) the composition is skewed to low complexity. The interval 1-55 (MHSVRTSTTSTSSMVSSTMHPFDAFNAPQPYQQHHPPRWNIHNPHFSQTNGHSIQ) is disordered. Positions 45-55 (HFSQTNGHSIQ) are enriched in polar residues. The isopentenyl diphosphate site is built by Lys-102, Arg-105, and His-134. Mg(2+) is bound by residues Asp-141 and Asp-145. Arg-150 is a dimethylallyl diphosphate binding site. Arg-151 is a binding site for isopentenyl diphosphate. 3 residues coordinate dimethylallyl diphosphate: Lys-229, Thr-230, and Gln-263. Residue Asp-266 participates in Mg(2+) binding. Positions 270, 280, and 290 each coordinate dimethylallyl diphosphate.

The protein belongs to the FPP/GGPP synthase family. The cofactor is Mg(2+).

It catalyses the reaction isopentenyl diphosphate + dimethylallyl diphosphate = (2E)-geranyl diphosphate + diphosphate. The enzyme catalyses isopentenyl diphosphate + (2E)-geranyl diphosphate = (2E,6E)-farnesyl diphosphate + diphosphate. The catalysed reaction is isopentenyl diphosphate + (2E,6E)-farnesyl diphosphate = (2E,6E,10E)-geranylgeranyl diphosphate + diphosphate. It functions in the pathway secondary metabolite biosynthesis; terpenoid biosynthesis. Its function is as follows. Geranylgeranyl pyrophosphate synthase; part of the cluster A that mediates the biosynthesis of chevalone E and its oxidized derivatives that possess a unique five-membered lactone ring and can synergistically enhance the cytotoxicity of doxorubicin (DOX) in breast cancer cells. Within the pathway, cle6 takes part to the biosynthesis of the molecular scaffold by providing geranylgeranyl pyrophosphate (GGPP) to the prenyltransferase cle5 for C-3 geranylgeranylation of triacetic acid lactone. The molecular scaffold is commonly biosynthesized by a series of enzymes including the non-reducing polyketide synthase (NR-PKS) cle1 that produces the alpha-pyrone triacetic acid lactone (TAL); The membrane-bound prenyltransferase cle5 that accepts TAL as its substrate to perform a C-3 geranylgeranylation reaction, in which the pathway-dedicated GGPS cle6 is required to provide GGPP, the other substrate of cle5; the FAD-dependent monooxygenase Cle3 that forms an (S)-epoxide ring at the terminal olefin of the geranylgeranyl group; and the terpene cyclase Cle7 that catalyzes the cyclization of the prenyl group that yields the pentacyclic pathway intermediate chevalone E. Chevalone E can derivatize into seven new oxidized analogs by the cytochrome P450 monooxygenases cle2 (acting at C-20) and cle4 (acting at C-11 and C-12). This is Geranylgeranyl pyrophosphate synthase cle6 from Aspergillus versicolor.